We begin with the raw amino-acid sequence, 213 residues long: uncharacterized protein (213 aa).

The chain crosses the membrane as a helical span at residues 22-42 (WFGLSMVSIAVIFGPLTGAHV). The NPA 1 signature appears at 43 to 45 (NPA). The next 3 membrane-spanning stretches (helical) occupy residues 63–83 (VYIIAQCIGAFIVALIVWLLF), 112–132 (NLLSEIVTTFSLLFILFTLNH), and 138–158 (GVAMFFVFTGVAGGVMSFGGL). Residues 164 to 166 (NPA) carry the NPA 2 motif. The helical transmembrane segment at 188–208 (FDYAWVPVLRPVIGAILAAWL) threads the bilayer.

It belongs to the MIP/aquaporin (TC 1.A.8) family.

It localises to the cell membrane. This is an uncharacterized protein from Haemophilus influenzae (strain ATCC 51907 / DSM 11121 / KW20 / Rd).